The chain runs to 123 residues: uncharacterized protein (123 aa).

A helical transmembrane segment spans residues 5–25 (GTLVIIFAIVLILCIMLLFFY). The interval 32 to 53 (KPSVLPPPIPPPTPPPSKKKYD) is disordered. The span at 35–47 (VLPPPIPPPTPPP) shows a compositional bias: pro residues.

The protein belongs to the asfivirus CP123L family.

It localises to the host membrane. It is found in the virion. This is an uncharacterized protein from Ornithodoros (relapsing fever ticks).